Here is a 2828-residue protein sequence, read N- to C-terminus: Matrix-remodeling-associated protein 5 (2828 aa).

The signal sequence occupies residues 1-26; sequence MPKRAHWGALSVVLILLWGHPRVALA. The 29-residue stretch at 27–55 folds into the LRRNT domain; the sequence is CPHPCACYVPSEVHCTFRSLASVPAGIAK. 6 LRR repeats span residues 56–77, 80–101, 104–125, 128–149, 152–173, and 184–205; these read HVERINLGFNSIQALSETSFAG, KLELLMIHGNEIPSIPDGALRD, SLQVFKFSYNKLRVITGQTLQG, NLMRLHIDHNKIEFIHPQAFNG, SLRLLHLEGNLLHQLHPSTFST, and TIRHLYLAENMVRTLPASMLRN. One can recognise an LRRCT domain in the interval 217 to 277; that stretch reads NPWTCDCEMR…HKLKDMTCLK (61 aa). N-linked (GlcNAc...) asparagine glycosylation is found at asparagine 287 and asparagine 321. Ig-like C2-type domains lie at 481–571 and 575–669; these read PSGA…YRVL and PSTQ…ITVT. 2 disulfides stabilise this stretch: cysteine 501–cysteine 555 and cysteine 599–cysteine 651. N-linked (GlcNAc...) asparagine glycosylation occurs at asparagine 633. Disordered stretches follow at residues 671 to 715, 933 to 962, 1068 to 1190, 1204 to 1275, and 1367 to 1389; these read KGSG…RRLL, KPTHEETATEGWSAADVGSSPEPTSSEYEP, QGGN…APDI, AWVD…SSET, and EESSPVGFPGTPTWNPSRTAQPG. Residues 695-708 show a composition bias toward acidic residues; the sequence is IVEDEGGSGMGDEE. O-linked (Xyl...) (chondroitin sulfate) serine glycosylation is present at serine 702. Over residues 951–962 the composition is skewed to low complexity; that stretch reads SSPEPTSSEYEP. Polar residues predominate over residues 1090–1107; that stretch reads SKSITLPDSTLGIMSSMS. The span at 1146 to 1168 shows a compositional bias: basic residues; sequence PSRRRPNGRRRLRPNKFRHRHKQ. 2 stretches are compositionally biased toward polar residues: residues 1169–1190 and 1204–1214; these read TPPTTFAPSETFSTQPTQAPDI and AWVDNTVNTPK. The segment covering 1229–1243 has biased composition (basic residues); the sequence is TPRRKHGKRPNKHRY. A glycan (N-linked (GlcNAc...) asparagine) is linked at asparagine 1403. An LRR 7 repeat occupies 1410-1434; sequence LKELEDVDFTSEFLSSLTVSTPFHQ. 5 disordered regions span residues 1479-1499, 1536-1566, 1579-1603, 1669-1689, and 1700-1719; these read QNHTPTAARMKEPASSSPSTI, NPETEATPVNNEGTQHMSGPNELSTPSSDQD, QVFGSRSLPRGPDSQRQDGRVHASH, STTIPLPLHMSKPSIPSKFTD, and KVFGNNNIPEARNPVGKPPS. Polar residues predominate over residues 1542–1566; sequence TPVNNEGTQHMSGPNELSTPSSDQD. An N-linked (GlcNAc...) asparagine glycan is attached at asparagine 1735. 10 Ig-like C2-type domains span residues 1853-1946, 1950-2041, 2046-2140, 2146-2239, 2242-2343, 2345-2432, 2440-2534, 2542-2630, 2637-2722, and 2733-2828; these read PQIL…LSVT, PQIL…IRLH, PPVI…LNVQ, ARIT…VDVV, PAKI…KVVT, PATI…KTVW, PKIN…LQLT, PIFH…RLVS, PEAN…PSVT, and PRIT…IHVF. Disulfide bonds link cysteine 1875-cysteine 1928 and cysteine 1972-cysteine 2025. 2 N-linked (GlcNAc...) asparagine glycosylation sites follow: asparagine 2007 and asparagine 2056. Disulfide bonds link cysteine 2069–cysteine 2122, cysteine 2168–cysteine 2221, cysteine 2265–cysteine 2324, cysteine 2368–cysteine 2418, cysteine 2466–cysteine 2518, cysteine 2564–cysteine 2616, cysteine 2659–cysteine 2711, and cysteine 2755–cysteine 2810. Asparagine 2693 is a glycosylation site (N-linked (GlcNAc...) asparagine).

Detected in placenta (at protein level). Detected in cerebrospinal fluid and fibroblasts (at protein level). Highly expressed in kidney, also detected on liver and spleen. Expressed by proximal tubular cells of the kidney (at protein level). Expression highly increases during chronic kidney disease and autosomal dominant polycystic kidney disease, where is detected in cysts.

It localises to the secreted. In terms of biological role, in kidney, has anti-inflammatory and anti-fibrotic properties by limiting the induction of chemokines, fibronectin and collagen expression in response to TGB1 and pro-inflammatory stimuli. This chain is Matrix-remodeling-associated protein 5 (MXRA5), found in Homo sapiens (Human).